A 256-amino-acid polypeptide reads, in one-letter code: Adenosine 5'-phosphosulfate reductase (256 aa).

C120, C121, C203, and C206 together coordinate [4Fe-4S] cluster. The active-site Nucleophile; cysteine thiosulfonate intermediate is C231.

It belongs to the PAPS reductase family. CysH subfamily. Requires [4Fe-4S] cluster as cofactor.

It localises to the cytoplasm. The enzyme catalyses [thioredoxin]-disulfide + sulfite + AMP + 2 H(+) = adenosine 5'-phosphosulfate + [thioredoxin]-dithiol. It participates in sulfur metabolism; hydrogen sulfide biosynthesis; sulfite from sulfate. Its function is as follows. Catalyzes the formation of sulfite from adenosine 5'-phosphosulfate (APS) using thioredoxin as an electron donor. This Allochromatium vinosum (strain ATCC 17899 / DSM 180 / NBRC 103801 / NCIMB 10441 / D) (Chromatium vinosum) protein is Adenosine 5'-phosphosulfate reductase.